We begin with the raw amino-acid sequence, 145 residues long: 3-hydroxyacyl-[acyl-carrier-protein] dehydratase FabZ (145 aa).

H47 is a catalytic residue.

It belongs to the thioester dehydratase family. FabZ subfamily.

It is found in the cytoplasm. The enzyme catalyses a (3R)-hydroxyacyl-[ACP] = a (2E)-enoyl-[ACP] + H2O. Involved in unsaturated fatty acids biosynthesis. Catalyzes the dehydration of short chain beta-hydroxyacyl-ACPs and long chain saturated and unsaturated beta-hydroxyacyl-ACPs. This is 3-hydroxyacyl-[acyl-carrier-protein] dehydratase FabZ from Acidovorax sp. (strain JS42).